The following is a 671-amino-acid chain: MDNGESSSTNNSSRPWESYNTVFTNAKAGMEGVDKEKVQRVVYEMSKGSKYFQNEERKEALMKQKIEHMRDRCAKLSSLDLSNYQKVVDKRILELEATRDLSRIWLHVDMDAFYAAVETLSDPSIKGKPMAVGGLSMISTANYEARKFGVRAAMPGFIARKLCPDLIFVPVDFTKYTHYSDLTRKVFRNYDPHFIAGSLDEAYLDITEVCRERGLSGGEIAEELRSSVYSETGLTCSAGVAANRLLAKVCSDINKPNGQFVLQNDRSTVMTFVSFLPVRKIGGIGKVTEHILKDALGIKTCEEMVQKGSLLYALFSQSSADFFLSVGLGLGGTNTPQVRSRKSISSERTFAATGDERLLYSKLDELAEMLSHDMKKEGLTARTLTLKLKTASFEIRSRAVSLQRYTCSSDDILKHATKLLKAELPVSVRLIGLRMSQFVEEIRNSDPSQGTITKFIVQKDSSRQAQDLDDNDSFDLDANKNCLSNDESGNVSFGSHETSSAHLKDVVEYEERSQIDSGKVIPNQECMKKEERLQILEGDSLLKKYKECKPDTSHSMNDNSNATEAVSVFPQTEPLYWIDGYKCVLCGIELPPSFVEERQEHSDFHLAQRLQNEETGSSSSTTPSKRRILGKEKVNSKPKKQKPDQKDSSKHIPIHAFFTKSNQNSNETQRK.

The UmuC domain occupies 105 to 285 (WLHVDMDAFY…LPVRKIGGIG (181 aa)). Positions 109 and 200 each coordinate Mg(2+). Residue Glu201 is part of the active site. Residues 576–613 (YWIDGYKCVLCGIELPPSFVEERQEHSDFHLAQRLQNE) form a UBZ3-type zinc finger. Residues Cys583, Cys586, His601, and His605 each contribute to the Zn(2+) site. Positions 607-671 (AQRLQNEETG…NQNSNETQRK (65 aa)) are disordered. The short motif at 625–632 (KRRILGKE) is the Nuclear localization signal element. Over residues 629–650 (LGKEKVNSKPKKQKPDQKDSSK) the composition is skewed to basic and acidic residues. The segment covering 659 to 671 (TKSNQNSNETQRK) has biased composition (polar residues).

It belongs to the DNA polymerase type-Y family. Mg(2+) is required as a cofactor. In terms of tissue distribution, expressed in roots, leaves, stems, flowers and siliques. Present in endoreduplicating cells.

It is found in the nucleus. The catalysed reaction is DNA(n) + a 2'-deoxyribonucleoside 5'-triphosphate = DNA(n+1) + diphosphate. Its activity is regulated as follows. Unable to bypass a single 1,N(6)-ethenoadenine (epsilon-dA) or an abasic site lesions in DNA templates. Its function is as follows. Template-directed low-fidelity DNA polymerase specifically involved in DNA repair. Able to extend primer-terminal mispairs, and to insert nucleotides opposite to a single 7,8-dihydro-8-oxoGuanine (8-oxoG) lesion and moderately extend from the resulting primer end, thus leading to both error-free and error-prone bypass of 8-oxoG DNA lesions. Probably involved in consecutive DNA replication cycles in the absence of mitosis. Binds preferentially template-primer DNA substrates or single-stranded DNA. Plays an important role in translesion synthesis, where the normal high-fidelity DNA polymerases cannot proceed and DNA synthesis stalls. Depending on the context, it inserts the correct base, but causes frequent base transitions, transversions and frameshifts. This chain is DNA polymerase kappa, found in Arabidopsis thaliana (Mouse-ear cress).